The primary structure comprises 188 residues: MFLLVGLGNPGKEYEKTRHNIGFEAVDKISYEYNIPIKRERFKGVFGDGRISNEKVILLKPTTYMNLSGESLREIIEYYNIPITNVIVIYDDVDLEVGRLRIRTKGSAGGHNGIKSIIYNLNSEDFIRLRIGVGKPQRDMVSHVLGKFAKEDEKNIEEVLKIIPELAYTIINQGPQEAMNKYNNFRAE.

Tyrosine 14 lines the tRNA pocket. Histidine 19 (proton acceptor) is an active-site residue. Residues tyrosine 64, asparagine 66, and asparagine 112 each coordinate tRNA.

Belongs to the PTH family. As to quaternary structure, monomer.

The protein resides in the cytoplasm. The catalysed reaction is an N-acyl-L-alpha-aminoacyl-tRNA + H2O = an N-acyl-L-amino acid + a tRNA + H(+). Functionally, hydrolyzes ribosome-free peptidyl-tRNAs (with 1 or more amino acids incorporated), which drop off the ribosome during protein synthesis, or as a result of ribosome stalling. Its function is as follows. Catalyzes the release of premature peptidyl moieties from peptidyl-tRNA molecules trapped in stalled 50S ribosomal subunits, and thus maintains levels of free tRNAs and 50S ribosomes. The chain is Peptidyl-tRNA hydrolase from Clostridium tetani (strain Massachusetts / E88).